Consider the following 943-residue polypeptide: Translation initiation factor IF-2 (943 aa).

Residues 30–357 (SVKSHSSSVE…KPVTERKFHE (328 aa)) are disordered. 5 stretches are compositionally biased toward basic and acidic residues: residues 69-82 (PKEE…DKAS), 112-137 (FKAE…DNRN), 145-155 (QGKRHNNDRRN), 163-196 (DHNK…RDNA), and 224-253 (RQSE…EKQQ). The span at 254–266 (VKVAVQKAAAETK) shows a compositional bias: low complexity. Residues 296–309 (KSRDNRRVNEDGPK) show a composition bias toward basic and acidic residues. The segment covering 313–332 (NNKWNNQNQVRNQRNSNWNK) has biased composition (low complexity). One can recognise a tr-type G domain in the interval 445-614 (ERAPVVTIMG…LLVAEVEELK (170 aa)). The G1 stretch occupies residues 454–461 (GHVDHGKT). 454-461 (GHVDHGKT) contacts GTP. A G2 region spans residues 479–483 (GITQH). The segment at 500 to 503 (DTPG) is G3. Residues 500–504 (DTPGH) and 554–557 (NKID) each bind GTP. The tract at residues 554–557 (NKID) is G4. The interval 590-592 (SAK) is G5.

Belongs to the TRAFAC class translation factor GTPase superfamily. Classic translation factor GTPase family. IF-2 subfamily.

It is found in the cytoplasm. Functionally, one of the essential components for the initiation of protein synthesis. Protects formylmethionyl-tRNA from spontaneous hydrolysis and promotes its binding to the 30S ribosomal subunits. Also involved in the hydrolysis of GTP during the formation of the 70S ribosomal complex. The sequence is that of Translation initiation factor IF-2 from Streptococcus thermophilus (strain ATCC BAA-250 / LMG 18311).